Consider the following 117-residue polypeptide: Large ribosomal subunit protein uL24 (117 aa).

Belongs to the universal ribosomal protein uL24 family. As to quaternary structure, part of the 50S ribosomal subunit.

Its function is as follows. One of two assembly initiator proteins, it binds directly to the 5'-end of the 23S rRNA, where it nucleates assembly of the 50S subunit. In terms of biological role, one of the proteins that surrounds the polypeptide exit tunnel on the outside of the subunit. This Trichormus variabilis (strain ATCC 29413 / PCC 7937) (Anabaena variabilis) protein is Large ribosomal subunit protein uL24.